The primary structure comprises 397 residues: Decapping and exoribonuclease protein (397 aa).

Residues 1–20 are compositionally biased toward basic and acidic residues; it reads MESRGTKREAGKIEVAEPRN. The segment at 1-37 is disordered; it reads MESRGTKREAGKIEVAEPRNKLPRPAPSLPTDPALYS. Residue R58 participates in substrate binding. The disordered stretch occupies residues 67–88; it reads LRYYSPPPTNGQSPNFDLRDGY. Substrate-binding positions include E101 and 131 to 133; that span reads WRG. E192 contributes to the Mg(2+) binding site. 2 residues coordinate substrate: C217 and E234. Residues E234, D236, E253, and L254 each coordinate Mg(2+). Substrate is bound by residues K255 and Q280. Phosphothreonine is present on T392. A Phosphoserine modification is found at S394.

The protein belongs to the DXO/Dom3Z family. Requires Mg(2+) as cofactor.

It localises to the nucleus. The catalysed reaction is a 5'-end triphospho-ribonucleoside in mRNA + H2O = a 5'-end phospho-ribonucleoside in mRNA + diphosphate + H(+). It carries out the reaction a 5'-end NAD(+)-phospho-ribonucleoside in mRNA + H2O = a 5'-end phospho-ribonucleoside in mRNA + NAD(+) + H(+). The enzyme catalyses a 5'-end NAD(+)-phospho-ribonucleoside in snoRNA + H2O = a 5'-end phospho-ribonucleoside in snoRNA + NAD(+) + H(+). It catalyses the reaction a 5'-end (N(7)-methyl 5'-triphosphoguanosine)-ribonucleoside-ribonucleotide in mRNA + H2O = a (N(7)-methyl 5'-triphosphoguanosine)-nucleoside + a 5'-end phospho-ribonucleoside in mRNA + H(+). The catalysed reaction is a 5'-end FAD-phospho-ribonucleoside in mRNA + H2O = a 5'-end phospho-ribonucleoside in mRNA + FAD + H(+). It carries out the reaction a 5'-end CoA-ribonucleoside in mRNA + H2O = 3'-dephospho-CoA + a 5'-end phospho-ribonucleoside in mRNA + H(+). Decapping enzyme for NAD-capped RNAs: specifically hydrolyzes the nicotinamide adenine dinucleotide (NAD) cap from a subset of RNAs by removing the entire NAD moiety from the 5'-end of an NAD-capped RNA. The NAD-cap is present at the 5'-end of some RNAs and snoRNAs. In contrast to the canonical 5'-end N7 methylguanosine (m7G) cap, the NAD cap promotes mRNA decay. Preferentially acts on NAD-capped transcripts in response to environmental stress. Also acts as a non-canonical decapping enzyme that removes the entire cap structure of m7G capped or incompletely capped RNAs and mediates their subsequent degradation. Specifically degrades pre-mRNAs with a defective 5'-end m7G cap and is part of a pre-mRNA capping quality control. Has decapping activity toward incomplete 5'-end m7G cap mRNAs such as unmethylated 5'-end-capped RNA (cap0), while it has no activity toward 2'-O-ribose methylated m7G cap (cap1). In contrast to canonical decapping enzymes DCP2 and NUDT16, which cleave the cap within the triphosphate linkage, the decapping activity releases the entire cap structure GpppN and a 5'-end monophosphate RNA. Also has 5'-3' exoribonuclease activities: The 5'-end monophosphate RNA is then degraded by the 5'-3' exoribonuclease activity, enabling this enzyme to decap and degrade incompletely capped mRNAs. Also possesses RNA 5'-pyrophosphohydrolase activity by hydrolyzing the 5'-end triphosphate to release pyrophosphates. Exhibits decapping activity towards FAD-capped RNAs. Exhibits decapping activity towards dpCoA-capped RNAs in vitro. The sequence is that of Decapping and exoribonuclease protein from Bos taurus (Bovine).